The chain runs to 122 residues: Large ribosomal subunit protein bL12 (122 aa).

It belongs to the bacterial ribosomal protein bL12 family. In terms of assembly, homodimer. Part of the ribosomal stalk of the 50S ribosomal subunit. Forms a multimeric L10(L12)X complex, where L10 forms an elongated spine to which 2 to 4 L12 dimers bind in a sequential fashion. Binds GTP-bound translation factors.

In terms of biological role, forms part of the ribosomal stalk which helps the ribosome interact with GTP-bound translation factors. Is thus essential for accurate translation. The polypeptide is Large ribosomal subunit protein bL12 (Deinococcus geothermalis (strain DSM 11300 / CIP 105573 / AG-3a)).